Here is an 865-residue protein sequence, read N- to C-terminus: Valine--tRNA ligase (865 aa).

The 'HIGH' region motif lies at 43–53; sequence PNITGRIHMGH. Positions 523 to 527 match the 'KMSKS' region motif; it reads KMSKS. Residue K526 participates in ATP binding. Residues 797–865 adopt a coiled-coil conformation; that stretch reads GLIDFEKEKE…RLESILRDLE (69 aa).

It belongs to the class-I aminoacyl-tRNA synthetase family. ValS type 1 subfamily. Monomer.

Its subcellular location is the cytoplasm. The catalysed reaction is tRNA(Val) + L-valine + ATP = L-valyl-tRNA(Val) + AMP + diphosphate. Catalyzes the attachment of valine to tRNA(Val). As ValRS can inadvertently accommodate and process structurally similar amino acids such as threonine, to avoid such errors, it has a 'posttransfer' editing activity that hydrolyzes mischarged Thr-tRNA(Val) in a tRNA-dependent manner. The chain is Valine--tRNA ligase from Thermotoga maritima (strain ATCC 43589 / DSM 3109 / JCM 10099 / NBRC 100826 / MSB8).